The chain runs to 629 residues: Phosphomethylpyrimidine synthase (629 aa).

Residues Asn-215, Met-244, Tyr-273, His-309, 329 to 331 (SRG), 370 to 373 (DGLR), and Glu-409 contribute to the substrate site. Residue His-413 coordinates Zn(2+). Tyr-436 is a substrate binding site. Position 477 (His-477) interacts with Zn(2+). [4Fe-4S] cluster-binding residues include Cys-557, Cys-560, and Cys-565. Positions 589–610 (ENIKRETSAEEAEEAREGMSDM) are disordered.

This sequence belongs to the ThiC family. As to quaternary structure, homodimer. It depends on [4Fe-4S] cluster as a cofactor.

It carries out the reaction 5-amino-1-(5-phospho-beta-D-ribosyl)imidazole + S-adenosyl-L-methionine = 4-amino-2-methyl-5-(phosphooxymethyl)pyrimidine + CO + 5'-deoxyadenosine + formate + L-methionine + 3 H(+). Its pathway is cofactor biosynthesis; thiamine diphosphate biosynthesis. Its function is as follows. Catalyzes the synthesis of the hydroxymethylpyrimidine phosphate (HMP-P) moiety of thiamine from aminoimidazole ribotide (AIR) in a radical S-adenosyl-L-methionine (SAM)-dependent reaction. The chain is Phosphomethylpyrimidine synthase from Erythrobacter litoralis (strain HTCC2594).